The sequence spans 601 residues: Elongation factor 4 (601 aa).

Residues 7–189 enclose the tr-type G domain; sequence DRIRNFSIIA…ALVTRLPAPK (183 aa). GTP is bound by residues 19–24 and 136–139; these read DHGKST and NKVD.

The protein belongs to the TRAFAC class translation factor GTPase superfamily. Classic translation factor GTPase family. LepA subfamily.

It is found in the cell inner membrane. The enzyme catalyses GTP + H2O = GDP + phosphate + H(+). Functionally, required for accurate and efficient protein synthesis under certain stress conditions. May act as a fidelity factor of the translation reaction, by catalyzing a one-codon backward translocation of tRNAs on improperly translocated ribosomes. Back-translocation proceeds from a post-translocation (POST) complex to a pre-translocation (PRE) complex, thus giving elongation factor G a second chance to translocate the tRNAs correctly. Binds to ribosomes in a GTP-dependent manner. The protein is Elongation factor 4 of Granulibacter bethesdensis (strain ATCC BAA-1260 / CGDNIH1).